A 503-amino-acid chain; its full sequence is ATP synthase subunit alpha (503 aa).

Residue 169 to 176 (GDRGTGKT) coordinates ATP.

It belongs to the ATPase alpha/beta chains family. In terms of assembly, F-type ATPases have 2 components, CF(1) - the catalytic core - and CF(0) - the membrane proton channel. CF(1) has five subunits: alpha(3), beta(3), gamma(1), delta(1), epsilon(1). CF(0) has three main subunits: a(1), b(2) and c(9-12). The alpha and beta chains form an alternating ring which encloses part of the gamma chain. CF(1) is attached to CF(0) by a central stalk formed by the gamma and epsilon chains, while a peripheral stalk is formed by the delta and b chains.

It localises to the cell inner membrane. It carries out the reaction ATP + H2O + 4 H(+)(in) = ADP + phosphate + 5 H(+)(out). In terms of biological role, produces ATP from ADP in the presence of a proton gradient across the membrane. The alpha chain is a regulatory subunit. The polypeptide is ATP synthase subunit alpha (Leptospira borgpetersenii serovar Hardjo-bovis (strain L550)).